We begin with the raw amino-acid sequence, 64 residues long: Epidermal growth factor (64 aa).

The signal sequence occupies residues 1-21; it reads MMRHLLLVGAAILIFVSDAQA. The residue at position 22 (Q22) is a Pyrrolidone carboxylic acid. In terms of domain architecture, EGF-like spans 25–61; the sequence is GEDPCQIVRCSYGANCIAYGDTAICECPFGYSGIRCQ. 3 disulfides stabilise this stretch: C29/C40, C34/C49, and C51/C60.

In terms of tissue distribution, albumen gland. Up-regulated in adult CNS after axotomy.

The protein resides in the secreted. In terms of biological role, induces neurite outgrowth in specific adult neurons in vitro. The sequence is that of Epidermal growth factor from Lymnaea stagnalis (Great pond snail).